The chain runs to 134 residues: uncharacterized protein (134 aa).

A signal peptide spans 1–37 (MSYIKRDHTALRDIAMKTFLKVVGLAASLSAASVAFS).

This is an uncharacterized protein from Coxiella burnetii (strain RSA 493 / Nine Mile phase I).